A 504-amino-acid chain; its full sequence is Anaerobic nitric oxide reductase transcription regulator NorR (504 aa).

A 4-aspartylphosphate modification is found at D57. The 230-residue stretch at M187–V416 folds into the Sigma-54 factor interaction domain. Residues G215–E222 and A278–E287 contribute to the ATP site. Residues W479–K498 constitute a DNA-binding region (H-T-H motif).

The protein operates within nitrogen metabolism; nitric oxide reduction. In terms of biological role, required for the expression of anaerobic nitric oxide (NO) reductase, acts as a transcriptional activator for at least the norVW operon. Activation also requires sigma-54. The polypeptide is Anaerobic nitric oxide reductase transcription regulator NorR (Shigella sonnei (strain Ss046)).